Consider the following 122-residue polypeptide: Large ribosomal subunit protein uL14c (122 aa).

The protein belongs to the universal ribosomal protein uL14 family. As to quaternary structure, part of the 50S ribosomal subunit.

The protein resides in the plastid. It localises to the chloroplast. Functionally, binds to 23S rRNA. This chain is Large ribosomal subunit protein uL14c, found in Manihot esculenta (Cassava).